The following is a 454-amino-acid chain: MPIIERILAREILDSRGNPTIQVEVTTDYGTTGVANVPSGASTGSREALELRDKGTKYENNWFGGKGVMTAVDNVNEIIALELEGLSVFNQREIDKIMIDLDGTATKSKLGANAILGVSLAVAKAAAAELEMPLYRYIGGANAHVLPLPMLNVLNGGEHASNTVDFQEFMIMPVGSKSLRQALQMANKVFHNLAKLLKKAGYGTQVGDEGGFAPNCKSHEEVLDYLVEAIKIAGYTPATKGKNAIAIALDAACSELYDEKTKKYTFKKLKQAISEKRPGFEHLGDVKLEYTSDELIEYFGKLIDKYPIISIEDGLAESDWEGFAKMTAKYGHKVQIVGDDLTVTNPKLLEKAIEQKSMNAILIKLNQIGTLSETMDAINKAQKANMACVVSHRSGETEDTTIADLAVAFNTGQIKTGSMSRTDRIAKYNRLLVIEEELGEQSEFEGIKAFYNIK.

(2R)-2-phosphoglycerate is bound at residue glutamine 167. Glutamate 209 serves as the catalytic Proton donor. Mg(2+) is bound by residues aspartate 250, glutamate 312, and aspartate 339. (2R)-2-phosphoglycerate is bound by residues lysine 364, arginine 393, serine 394, and lysine 415. Lysine 364 acts as the Proton acceptor in catalysis.

Belongs to the enolase family. Mg(2+) is required as a cofactor.

Its subcellular location is the cytoplasm. The protein localises to the secreted. The protein resides in the cell surface. It catalyses the reaction (2R)-2-phosphoglycerate = phosphoenolpyruvate + H2O. The protein operates within carbohydrate degradation; glycolysis; pyruvate from D-glyceraldehyde 3-phosphate: step 4/5. Its function is as follows. Catalyzes the reversible conversion of 2-phosphoglycerate (2-PG) into phosphoenolpyruvate (PEP). It is essential for the degradation of carbohydrates via glycolysis. This is Enolase from Mycoplasmopsis agalactiae (strain NCTC 10123 / CIP 59.7 / PG2) (Mycoplasma agalactiae).